The chain runs to 62 residues: Photosystem II reaction center protein Z (62 aa).

The next 2 membrane-spanning stretches (helical) occupy residues 8–28 (LVLL…VVLA) and 41–61 (YTGA…NSLV).

It belongs to the PsbZ family. PSII is composed of 1 copy each of membrane proteins PsbA, PsbB, PsbC, PsbD, PsbE, PsbF, PsbH, PsbI, PsbJ, PsbK, PsbL, PsbM, PsbT, PsbX, PsbY, PsbZ, Psb30/Ycf12, at least 3 peripheral proteins of the oxygen-evolving complex and a large number of cofactors. It forms dimeric complexes.

The protein localises to the plastid. The protein resides in the chloroplast thylakoid membrane. Functionally, may control the interaction of photosystem II (PSII) cores with the light-harvesting antenna, regulates electron flow through the 2 photosystem reaction centers. PSII is a light-driven water plastoquinone oxidoreductase, using light energy to abstract electrons from H(2)O, generating a proton gradient subsequently used for ATP formation. This is Photosystem II reaction center protein Z from Pyropia yezoensis (Susabi-nori).